Reading from the N-terminus, the 270-residue chain is Shikimate dehydrogenase (NADP(+)) (270 aa).

Residues 15-17 (SKS) and T62 each bind shikimate. K66 (proton acceptor) is an active-site residue. The shikimate site is built by N87 and D102. NADP(+) is bound by residues 127-131 (GAGGA), 151-156 (NRTVAR), and M214. Y216 contributes to the shikimate binding site. G238 contributes to the NADP(+) binding site.

It belongs to the shikimate dehydrogenase family. In terms of assembly, homodimer.

It catalyses the reaction shikimate + NADP(+) = 3-dehydroshikimate + NADPH + H(+). The protein operates within metabolic intermediate biosynthesis; chorismate biosynthesis; chorismate from D-erythrose 4-phosphate and phosphoenolpyruvate: step 4/7. Involved in the biosynthesis of the chorismate, which leads to the biosynthesis of aromatic amino acids. Catalyzes the reversible NADPH linked reduction of 3-dehydroshikimate (DHSA) to yield shikimate (SA). The chain is Shikimate dehydrogenase (NADP(+)) from Alkalilimnicola ehrlichii (strain ATCC BAA-1101 / DSM 17681 / MLHE-1).